The primary structure comprises 429 residues: Endoglucanase type C (429 aa).

Positions 1 to 18 (MKSLSLILSALAVQVAVA) are cleaved as a signal peptide. At glutamine 19 the chain carries Pyrrolidone carboxylic acid. Intrachain disulfides connect cysteine 36–cysteine 42, cysteine 66–cysteine 88, cysteine 78–cysteine 84, cysteine 156–cysteine 383, cysteine 190–cysteine 213, cysteine 194–cysteine 212, cysteine 233–cysteine 252, cysteine 241–cysteine 246, and cysteine 257–cysteine 333. A glycan (N-linked (GlcNAc...) asparagine) is linked at asparagine 74. The Nucleophile role is filled by glutamate 215. Glutamate 220 functions as the Proton donor in the catalytic mechanism. Residues asparagine 265 and asparagine 318 are each glycosylated (N-linked (GlcNAc...) asparagine).

Belongs to the glycosyl hydrolase 7 (cellulase C) family.

It carries out the reaction Endohydrolysis of (1-&gt;4)-beta-D-glucosidic linkages in cellulose, lichenin and cereal beta-D-glucans.. The chain is Endoglucanase type C from Fusarium oxysporum (Fusarium vascular wilt).